The chain runs to 647 residues: Acetyl-coenzyme A synthetase (647 aa).

CoA is bound by residues 190–193 (RGGK), threonine 310, and asparagine 334. ATP contacts are provided by residues 386 to 388 (GEP), 410 to 415 (DTWWQT), aspartate 499, and arginine 514. Residue serine 522 coordinates CoA. Arginine 525 contacts ATP. 3 residues coordinate Mg(2+): valine 536, histidine 538, and valine 541. A CoA-binding site is contributed by arginine 583. Lysine 608 is subject to N6-acetyllysine.

This sequence belongs to the ATP-dependent AMP-binding enzyme family. It depends on Mg(2+) as a cofactor. Post-translationally, acetylated. Deacetylation by the SIR2-homolog deacetylase activates the enzyme.

The catalysed reaction is acetate + ATP + CoA = acetyl-CoA + AMP + diphosphate. Catalyzes the conversion of acetate into acetyl-CoA (AcCoA), an essential intermediate at the junction of anabolic and catabolic pathways. AcsA undergoes a two-step reaction. In the first half reaction, AcsA combines acetate with ATP to form acetyl-adenylate (AcAMP) intermediate. In the second half reaction, it can then transfer the acetyl group from AcAMP to the sulfhydryl group of CoA, forming the product AcCoA. This is Acetyl-coenzyme A synthetase from Xanthomonas oryzae pv. oryzae (strain MAFF 311018).